Here is a 256-residue protein sequence, read N- to C-terminus: MAKGGKSPKGKKITLNVAKNCIKITFDGRKRLDLSKMGITTFPKCILRLNEIDELDLSRNMIRKIPDSISKFQNLRWLDLHSNYIDKLPESIGQMTSLLFLNVSNNRLTTNGLPVELNQLKNIRTVNLGLNHLDSVPTTLGALKELHEVGLHDNLLTSIPAGISKLPKLKKLNVKRNPFPKPDESDMFVDSIKRLENLYLVEEKDLCSSCLQKCQQARDKLNKIRSMAPSAPRKAIFSNLVSPNSTAKESQEEWSV.

LRR repeat units lie at residues 28 to 49 (GRKR…ILRL), 51 to 72 (EIDE…ISKF), 74 to 95 (NLRW…IGQM), 97 to 118 (SLLF…VELN), 122 to 144 (NIRT…GALK), 145 to 167 (ELHE…SKLP), 168 to 189 (KLKK…DMFV), and 194 to 215 (RLEN…QKCQ).

It localises to the cytoplasm. May be involved in the regulation of spermatogenesis and sperm maturation. The chain is Leucine-rich repeat-containing protein 18 (Lrrc18) from Rattus norvegicus (Rat).